The chain runs to 363 residues: UDP-N-acetylenolpyruvoylglucosamine reductase (363 aa).

Positions 25–201 (IGPVARRMLT…RSAPVRYREL (177 aa)) constitute an FAD-binding PCMH-type domain. The active site involves arginine 168. Serine 249 serves as the catalytic Proton donor. Residue glutamate 352 is part of the active site.

The protein belongs to the MurB family. The cofactor is FAD.

The protein localises to the cytoplasm. It carries out the reaction UDP-N-acetyl-alpha-D-muramate + NADP(+) = UDP-N-acetyl-3-O-(1-carboxyvinyl)-alpha-D-glucosamine + NADPH + H(+). It functions in the pathway cell wall biogenesis; peptidoglycan biosynthesis. Cell wall formation. This chain is UDP-N-acetylenolpyruvoylglucosamine reductase, found in Mycolicibacterium smegmatis (strain ATCC 700084 / mc(2)155) (Mycobacterium smegmatis).